Consider the following 497-residue polypeptide: Glycerol kinase (497 aa).

Threonine 12 serves as a coordination point for ADP. Residues threonine 12, threonine 13, and serine 14 each contribute to the ATP site. Threonine 12 lines the sn-glycerol 3-phosphate pocket. Arginine 16 contacts ADP. Positions 82, 83, 132, and 239 each coordinate sn-glycerol 3-phosphate. The glycerol site is built by arginine 82, glutamate 83, tyrosine 132, aspartate 239, and glutamine 240. Positions 261 and 303 each coordinate ADP. ATP-binding residues include threonine 261, glycine 303, glutamine 307, and glycine 402. ADP-binding residues include glycine 402 and asparagine 406.

The protein belongs to the FGGY kinase family. As to quaternary structure, homodimer.

The catalysed reaction is glycerol + ATP = sn-glycerol 3-phosphate + ADP + H(+). It functions in the pathway polyol metabolism; glycerol degradation via glycerol kinase pathway; sn-glycerol 3-phosphate from glycerol: step 1/1. Functionally, key enzyme in the regulation of glycerol uptake and metabolism. Catalyzes the phosphorylation of glycerol to yield sn-glycerol 3-phosphate. Can utilize other nucleoside triphosphates (GTP, CTP, UTP and ITP) as a phosphoryl donor. The protein is Glycerol kinase of Thermococcus kodakarensis (strain ATCC BAA-918 / JCM 12380 / KOD1) (Pyrococcus kodakaraensis (strain KOD1)).